The primary structure comprises 236 residues: Small ribosomal subunit protein uS2c (236 aa).

Belongs to the universal ribosomal protein uS2 family.

It is found in the plastid. Its subcellular location is the chloroplast. The chain is Small ribosomal subunit protein uS2c (rps2) from Acorus calamus var. americanus (American sweet flag).